Here is a 182-residue protein sequence, read N- to C-terminus: UPF0397 protein BCQ_2505 (182 aa).

The next 5 helical transmembrane spans lie at 9–29 (VVAI…GFSI), 40–60 (AILT…IGLI), 71–91 (WGIW…MGFI), 114–134 (ITGL…DIIV), and 142–162 (IVIQ…VLGL).

This sequence belongs to the UPF0397 family.

It localises to the cell membrane. This is UPF0397 protein BCQ_2505 from Bacillus cereus (strain Q1).